Consider the following 154-residue polypeptide: 6,7-dimethyl-8-ribityllumazine synthase (154 aa).

Residues Phe-22, 56–58 (AFE), and 80–82 (AVI) each bind 5-amino-6-(D-ribitylamino)uracil. 85-86 (AT) lines the (2S)-2-hydroxy-3-oxobutyl phosphate pocket. His-88 functions as the Proton donor in the catalytic mechanism. Phe-113 contacts 5-amino-6-(D-ribitylamino)uracil. Residue Arg-127 coordinates (2S)-2-hydroxy-3-oxobutyl phosphate.

The protein belongs to the DMRL synthase family.

It carries out the reaction (2S)-2-hydroxy-3-oxobutyl phosphate + 5-amino-6-(D-ribitylamino)uracil = 6,7-dimethyl-8-(1-D-ribityl)lumazine + phosphate + 2 H2O + H(+). It functions in the pathway cofactor biosynthesis; riboflavin biosynthesis; riboflavin from 2-hydroxy-3-oxobutyl phosphate and 5-amino-6-(D-ribitylamino)uracil: step 1/2. Functionally, catalyzes the formation of 6,7-dimethyl-8-ribityllumazine by condensation of 5-amino-6-(D-ribitylamino)uracil with 3,4-dihydroxy-2-butanone 4-phosphate. This is the penultimate step in the biosynthesis of riboflavin. The chain is 6,7-dimethyl-8-ribityllumazine synthase from Clostridium botulinum (strain Okra / Type B1).